Here is a 581-residue protein sequence, read N- to C-terminus: 2-succinyl-5-enolpyruvyl-6-hydroxy-3-cyclohexene-1-carboxylate synthase (581 aa).

Belongs to the TPP enzyme family. MenD subfamily. As to quaternary structure, homodimer. Mg(2+) is required as a cofactor. The cofactor is Mn(2+). Requires thiamine diphosphate as cofactor.

It catalyses the reaction isochorismate + 2-oxoglutarate + H(+) = 5-enolpyruvoyl-6-hydroxy-2-succinyl-cyclohex-3-ene-1-carboxylate + CO2. It functions in the pathway quinol/quinone metabolism; 1,4-dihydroxy-2-naphthoate biosynthesis; 1,4-dihydroxy-2-naphthoate from chorismate: step 2/7. It participates in cofactor biosynthesis; phylloquinone biosynthesis. Functionally, catalyzes the thiamine diphosphate-dependent decarboxylation of 2-oxoglutarate and the subsequent addition of the resulting succinic semialdehyde-thiamine pyrophosphate anion to isochorismate to yield 2-succinyl-5-enolpyruvyl-6-hydroxy-3-cyclohexene-1-carboxylate (SEPHCHC). The protein is 2-succinyl-5-enolpyruvyl-6-hydroxy-3-cyclohexene-1-carboxylate synthase of Gloeothece citriformis (strain PCC 7424) (Cyanothece sp. (strain PCC 7424)).